Here is a 729-residue protein sequence, read N- to C-terminus: Fatty acid oxidation complex subunit alpha (729 aa).

Residues 1 to 189 (MLYKGDTLYL…KIGLVDGVVK (189 aa)) are enoyl-CoA hydratase/isomerase. Aspartate 296 contacts substrate. Residues 311–729 (ETPKQAAVLG…ARPVGDLKTA (419 aa)) form a 3-hydroxyacyl-CoA dehydrogenase region. Residues methionine 324, aspartate 343, 400-402 (VVE), lysine 407, and serine 429 each bind NAD(+). Histidine 450 acts as the For 3-hydroxyacyl-CoA dehydrogenase activity in catalysis. Residue asparagine 453 participates in NAD(+) binding. Substrate-binding residues include asparagine 500 and tyrosine 660. A disordered region spans residues 708–729 (RHNEPYYPPVEPARPVGDLKTA).

In the N-terminal section; belongs to the enoyl-CoA hydratase/isomerase family. The protein in the C-terminal section; belongs to the 3-hydroxyacyl-CoA dehydrogenase family. In terms of assembly, heterotetramer of two alpha chains (FadB) and two beta chains (FadA).

The enzyme catalyses a (3S)-3-hydroxyacyl-CoA + NAD(+) = a 3-oxoacyl-CoA + NADH + H(+). The catalysed reaction is a (3S)-3-hydroxyacyl-CoA = a (2E)-enoyl-CoA + H2O. It carries out the reaction a 4-saturated-(3S)-3-hydroxyacyl-CoA = a (3E)-enoyl-CoA + H2O. It catalyses the reaction (3S)-3-hydroxybutanoyl-CoA = (3R)-3-hydroxybutanoyl-CoA. The enzyme catalyses a (3Z)-enoyl-CoA = a 4-saturated (2E)-enoyl-CoA. The catalysed reaction is a (3E)-enoyl-CoA = a 4-saturated (2E)-enoyl-CoA. The protein operates within lipid metabolism; fatty acid beta-oxidation. Involved in the aerobic and anaerobic degradation of long-chain fatty acids via beta-oxidation cycle. Catalyzes the formation of 3-oxoacyl-CoA from enoyl-CoA via L-3-hydroxyacyl-CoA. It can also use D-3-hydroxyacyl-CoA and cis-3-enoyl-CoA as substrate. This Escherichia coli O6:H1 (strain CFT073 / ATCC 700928 / UPEC) protein is Fatty acid oxidation complex subunit alpha.